The primary structure comprises 421 residues: Osmoprotective compounds-binding protein GgtB (421 aa).

Residues 1–18 (MKFFKITTLIISLIVLTS) form the signal peptide. A lipid anchor (N-palmitoyl cysteine) is attached at C19. C19 carries S-diacylglycerol cysteine lipidation.

The protein belongs to the bacterial solute-binding protein 1 family. The complex is composed of two ATP-binding proteins (GgtA), two transmembrane proteins (GgtC and GgtD) and a solute-binding protein (GgtB).

It localises to the cell membrane. Part of the ABC transporter complex GgtABCD involved in the uptake of the osmoprotective compounds glucosylglycerol (GG), sucrose and trehalose. Binds glucosylglycerol and exhibits a somewhat lower affinity towards sucrose and a substantially lower affinity towards trehalose. This Synechocystis sp. (strain ATCC 27184 / PCC 6803 / Kazusa) protein is Osmoprotective compounds-binding protein GgtB.